A 63-amino-acid chain; its full sequence is Chymotrypsin/elastase isoinhibitor 1 (63 aa).

5 disulfides stabilise this stretch: C5-C38, C14-C33, C17-C29, C21-C60, and C40-C54. The 56-residue stretch at 5–60 folds into the TIL domain; the sequence is CGPNEVWTECTGCEMKCGPDENTPCPLMCRRPSCECSPGRGMRRTNDGKCIPASQC.

The protein belongs to the serine protease inhibitor-like (TIL domain-containing) family.

Its subcellular location is the secreted. In terms of biological role, defends the organism against the host's proteinases. The polypeptide is Chymotrypsin/elastase isoinhibitor 1 (Ascaris suum (Pig roundworm)).